The primary structure comprises 117 residues: Large ribosomal subunit protein bL20c (117 aa).

The protein belongs to the bacterial ribosomal protein bL20 family.

Its subcellular location is the plastid. It is found in the chloroplast. Its function is as follows. Binds directly to 23S ribosomal RNA and is necessary for the in vitro assembly process of the 50S ribosomal subunit. It is not involved in the protein synthesizing functions of that subunit. The chain is Large ribosomal subunit protein bL20c from Barbarea verna (Land cress).